Here is a 121-residue protein sequence, read N- to C-terminus: Ribonuclease P protein component 4 (121 aa).

Zn(2+) contacts are provided by C63, C66, C89, and C92.

Belongs to the eukaryotic/archaeal RNase P protein component 4 family. Consists of a catalytic RNA component and at least 4-5 protein subunits. Zn(2+) is required as a cofactor.

Its subcellular location is the cytoplasm. It catalyses the reaction Endonucleolytic cleavage of RNA, removing 5'-extranucleotides from tRNA precursor.. In terms of biological role, part of ribonuclease P, a protein complex that generates mature tRNA molecules by cleaving their 5'-ends. In Methanobrevibacter smithii (strain ATCC 35061 / DSM 861 / OCM 144 / PS), this protein is Ribonuclease P protein component 4.